The primary structure comprises 832 residues: Armadillo segment polarity protein (832 aa).

Over residues 1–20 the composition is skewed to polar residues; it reads MSYQMPQNRTMSHNPYNSSD. Residues 1–24 form a disordered region; sequence MSYQMPQNRTMSHNPYNSSDMPMP. ARM repeat units lie at residues 146-185, 188-228, 230-269, 272-311, 356-395, 397-434, 483-524, 594-634, and 636-675; these read NYQD…QLSK, ASRH…NLSH, RQGL…NLLL, DGSK…ILAY, SSNK…NLSD, ATKV…NLTC, SESA…NLAL, ELNR…ELAV, and KEVA…KMSE. The disordered stretch occupies residues 721 to 832; sequence AYEGLYGQGP…QVAAWYDTDL (112 aa). The segment covering 767–777 has biased composition (low complexity); it reads PAGSNPNAGNN.

Belongs to the beta-catenin family.

The protein localises to the cytoplasm. The protein resides in the cell membrane. It localises to the cell junction. Its subcellular location is the adherens junction. Its function is as follows. May associate with CadN and participate in the transmission of developmental information. Can associate with alpha-catenin. Accumulates through wg signaling; arm function in wg signal transduction is required early in development for determination of neuroblast fate. Arm and Abl proteins function cooperatively at adherens junctions in both the CNS and epidermis. This chain is Armadillo segment polarity protein, found in Aedes aegypti (Yellowfever mosquito).